The following is a 165-amino-acid chain: MTITGKLKSVLLTYSFIISINLLTTMSEASAPSGNPPPPPPPPPPPIEGLNKFKSLNSPPNHQLDNSAKVEQAQHTNKNYTTSNIKTQLSQSLEVPTPTGEFGKKYSKLINPKTSKQNLKIEFPNKIISLVRDELTTKYFAADIEKILTLFSKKNDVILSEAKEK.

Positions 28-97 (EASAPSGNPP…QLSQSLEVPT (70 aa)) are disordered. The span at 34-47 (GNPPPPPPPPPPPI) shows a compositional bias: pro residues. Polar residues-rich tracts occupy residues 54-66 (KSLN…QLDN) and 73-94 (AQHT…QSLE).

This is an uncharacterized protein from Rickettsia prowazekii (strain Madrid E).